The following is a 181-amino-acid chain: TATA-box-binding protein (181 aa).

Repeat copies occupy residues 7–83 (VVNV…VKEL) and 98–173 (VQNM…SKTL).

This sequence belongs to the TBP family.

Functionally, general factor that plays a role in the activation of archaeal genes transcribed by RNA polymerase. Binds specifically to the TATA box promoter element which lies close to the position of transcription initiation. The sequence is that of TATA-box-binding protein from Methanococcus maripaludis (strain DSM 14266 / JCM 13030 / NBRC 101832 / S2 / LL).